A 410-amino-acid chain; its full sequence is E3 ubiquitin-protein ligase PRT1 (410 aa).

2 RING-type zinc fingers span residues 26–66 and 192–232; these read CCVC…PICR and CSAC…QECN. The segment at 306–370 adopts a ZZ-type zinc-finger fold; that stretch reads HFGAGCDSCG…RLELARSPQV (65 aa). The Zn(2+) site is built by C311, C314, C326, C329, C338, C341, H356, and H360. The segment at 385 to 410 is disordered; the sequence is ISNEGMDTDEGEEGPPGSSNESSSTE. A compositionally biased stretch (low complexity) spans 399 to 410; it reads PPGSSNESSSTE.

It is found in the cytoplasm. The enzyme catalyses S-ubiquitinyl-[E2 ubiquitin-conjugating enzyme]-L-cysteine + [acceptor protein]-L-lysine = [E2 ubiquitin-conjugating enzyme]-L-cysteine + N(6)-ubiquitinyl-[acceptor protein]-L-lysine.. Its pathway is protein modification; protein ubiquitination. Its function is as follows. E3 ubiquitin-protein ligase that mediates ubiquitination and subsequent proteasomal degradation of target proteins. Functions in the N-end rule pathway of protein degradation, where it specifically recognizes and ubiquitinates proteins with a N-terminal bulky aromatic amino acid (Phe). Does not act on aliphatic hydrophobic and basic N-terminal residues (Arg or Leu) containing proteins. This chain is E3 ubiquitin-protein ligase PRT1 (PRT1), found in Arabidopsis thaliana (Mouse-ear cress).